The sequence spans 454 residues: tRNA modification GTPase MnmE (454 aa).

Residues arginine 23, glutamate 80, and lysine 120 each coordinate (6S)-5-formyl-5,6,7,8-tetrahydrofolate. The TrmE-type G domain occupies 216-377 (GMKVVIAGRP…LRNHLKQSMG (162 aa)). Residue asparagine 226 coordinates K(+). Residues 226-231 (NAGKSS), 245-251 (TDIAGTT), 270-273 (DTAG), 335-338 (NKAD), and 358-360 (SAR) contribute to the GTP site. Serine 230 serves as a coordination point for Mg(2+). Threonine 245, isoleucine 247, and threonine 250 together coordinate K(+). Mg(2+) is bound at residue threonine 251. Residue lysine 454 participates in (6S)-5-formyl-5,6,7,8-tetrahydrofolate binding.

Belongs to the TRAFAC class TrmE-Era-EngA-EngB-Septin-like GTPase superfamily. TrmE GTPase family. In terms of assembly, homodimer. Heterotetramer of two MnmE and two MnmG subunits. The cofactor is K(+).

It is found in the cytoplasm. Its function is as follows. Exhibits a very high intrinsic GTPase hydrolysis rate. Involved in the addition of a carboxymethylaminomethyl (cmnm) group at the wobble position (U34) of certain tRNAs, forming tRNA-cmnm(5)s(2)U34. The chain is tRNA modification GTPase MnmE from Salmonella typhi.